Consider the following 292-residue polypeptide: CCR4-NOT transcription complex subunit 8 (292 aa).

The a divalent metal cation site is built by Asp-40, Glu-42, Asp-161, and Asp-230.

Belongs to the CAF1 family. Component of the CCR4-NOT complex; distinct complexes seem to exist that differ in the participation of probably mutually exclusive catalytic subunits; the complex contains two deadenylase subunits, CNOT6 or CNOT6L, and CNOT7 or CNOT8. In the complex interacts directly with CNOT1. Interacts with BTG1, BTG2 and TOB1. Interacts with BTG4.

The protein resides in the cytoplasm. Its subcellular location is the nucleus. It carries out the reaction Exonucleolytic cleavage of poly(A) to 5'-AMP.. Functionally, has 3'-5' poly(A) exoribonuclease activity for synthetic poly(A) RNA substrate. Its function seems to be partially redundant with that of CNOT7. Catalytic component of the CCR4-NOT complex which is linked to various cellular processes including bulk mRNA degradation, miRNA-mediated repression, translational repression during translational initiation and general transcription regulation. During miRNA-mediated repression the complex also seems to act as translational repressor during translational initiation. Additional complex functions may be a consequence of its influence on mRNA expression. Associates with members of the BTG family such as TOB1 and BTG2 and is required for their anti-proliferative activity. The chain is CCR4-NOT transcription complex subunit 8 (CNOT8) from Homo sapiens (Human).